The following is a 545-amino-acid chain: Lysine--tRNA ligase (545 aa).

The short motif at Pro41 to His49 is the 'HIGH' region element. The 'KMSKS' region motif lies at Ala306–Ser310.

The protein belongs to the class-I aminoacyl-tRNA synthetase family.

The protein localises to the cytoplasm. The enzyme catalyses tRNA(Lys) + L-lysine + ATP = L-lysyl-tRNA(Lys) + AMP + diphosphate. The chain is Lysine--tRNA ligase from Natronomonas pharaonis (strain ATCC 35678 / DSM 2160 / CIP 103997 / JCM 8858 / NBRC 14720 / NCIMB 2260 / Gabara) (Halobacterium pharaonis).